Here is a 264-residue protein sequence, read N- to C-terminus: DNA-directed RNA polymerase subunit Rpo3 (264 aa).

Residues C203, C206, and C209 each contribute to the [3Fe-4S] cluster site.

This sequence belongs to the archaeal Rpo3/eukaryotic RPB3 RNA polymerase subunit family. In terms of assembly, part of the RNA polymerase complex. [3Fe-4S] cluster serves as cofactor.

It localises to the cytoplasm. It carries out the reaction RNA(n) + a ribonucleoside 5'-triphosphate = RNA(n+1) + diphosphate. Its function is as follows. DNA-dependent RNA polymerase (RNAP) catalyzes the transcription of DNA into RNA using the four ribonucleoside triphosphates as substrates. This Archaeoglobus fulgidus (strain ATCC 49558 / DSM 4304 / JCM 9628 / NBRC 100126 / VC-16) protein is DNA-directed RNA polymerase subunit Rpo3.